A 248-amino-acid polypeptide reads, in one-letter code: Ribosomal RNA small subunit methyltransferase G (248 aa).

Residues Gly-85, Phe-90, 108 to 110 (DSS), 137 to 138 (AE), and Arg-156 contribute to the S-adenosyl-L-methionine site.

It belongs to the methyltransferase superfamily. RNA methyltransferase RsmG family.

It localises to the cytoplasm. Its function is as follows. Specifically methylates the N7 position of a guanine in 16S rRNA. The protein is Ribosomal RNA small subunit methyltransferase G of Prochlorococcus marinus (strain NATL1A).